We begin with the raw amino-acid sequence, 600 residues long: uncharacterized protein (600 aa).

2 consecutive 4Fe-4S ferredoxin-type domains span residues 14–44 and 53–82; these read RLAI…MGEK and GKPV…IIGL. 2 consecutive ABC transporter domains span residues 77-318 and 348-563; these read ISII…YLYG and LLSY…LKEM. ATP-binding positions include 117–124 and 380–387; these read GQNGIGKS and GPNGIGKT. The segment covering 569–594 has biased composition (basic and acidic residues); sequence RDPETGRPRANKEGSQRDIMQKEKGE. The interval 569-600 is disordered; it reads RDPETGRPRANKEGSQRDIMQKEKGEYYYVDE.

The protein belongs to the ABC transporter superfamily.

This is an uncharacterized protein from Methanocaldococcus jannaschii (strain ATCC 43067 / DSM 2661 / JAL-1 / JCM 10045 / NBRC 100440) (Methanococcus jannaschii).